A 225-amino-acid chain; its full sequence is Small ribosomal subunit protein uS2 (225 aa).

The span at 1-14 shows a compositional bias: basic and acidic residues; it reads MAEAKPAPEKEAAA. The interval 1–33 is disordered; sequence MAEAKPAPEKEAAAKTESVPVETEGEGPSVKEG.

The protein belongs to the universal ribosomal protein uS2 family.

The polypeptide is Small ribosomal subunit protein uS2 (Methanosarcina barkeri (strain Fusaro / DSM 804)).